Reading from the N-terminus, the 368-residue chain is Probable replication factor C subunit 5 (368 aa).

G69–T76 is an ATP binding site.

This sequence belongs to the activator 1 small subunits family. As to quaternary structure, heteropentamer of various rfc subunits that forms a complex (RFC) with PCNA in the presence of ATP.

It is found in the nucleus. Functionally, the elongation of primed DNA templates by DNA polymerase delta and epsilon requires the action of the accessory proteins proliferating cell nuclear antigen (PCNA) and activator 1. The protein is Probable replication factor C subunit 5 of Caenorhabditis elegans.